We begin with the raw amino-acid sequence, 532 residues long: Beta-hexosaminidase subunit A1 (532 aa).

Positions Met-1–Gly-18 are cleaved as a signal peptide. N-linked (GlcNAc...) asparagine glycosylation is found at Asn-72 and Asn-79. Residue Glu-308 is the Proton donor of the active site. Asn-350 and Asn-427 each carry an N-linked (GlcNAc...) asparagine glycan.

This sequence belongs to the glycosyl hydrolase 20 family. As to quaternary structure, dimer. The N-terminus is blocked. In terms of processing, N-glycosylated.

It is found in the lysosome. It carries out the reaction Hydrolysis of terminal non-reducing N-acetyl-D-hexosamine residues in N-acetyl-beta-D-hexosaminides.. Functionally, responsible for the degradation of GM2 gangliosides, and a variety of other molecules containing terminal N-acetyl hexosamines. This enzyme plays a role during the slug stage of development in the maintenance of pseudoplasmodia of normal size. The sequence is that of Beta-hexosaminidase subunit A1 (hexa1) from Dictyostelium discoideum (Social amoeba).